A 365-amino-acid polypeptide reads, in one-letter code: GDSL lipase (365 aa).

Residues 1 to 27 form the signal peptide; the sequence is MAVASRKLGALVLVAVLCLSLPTGCLS. Ser-40 serves as the catalytic Nucleophile. Asn-189 and Asn-310 each carry an N-linked (GlcNAc...) asparagine glycan. Active-site charge relay system residues include Asp-318 and His-321.

This sequence belongs to the 'GDSL' lipolytic enzyme family. In terms of tissue distribution, restricted to the pericarp during achene maturation. Expressed in the leaves of mature plants and seedlings, as well as in buds and flowers. Present in disk florets.

The protein resides in the secreted. Its subcellular location is the extracellular space. It carries out the reaction (Z,S)-pyrethrolone + (1R,3R)-chrysanthemoyl-CoA = pyrethrin I + CoA. It catalyses the reaction (Z,S)-pyrethrolone + (1R,3R)-pyrethroyl-CoA = pyrethrin II + CoA. The enzyme catalyses (Z,S)-jasmololone + (1R,3R)-chrysanthemoyl-CoA = jasmolin I + CoA. The catalysed reaction is (Z,S)-cinerolone + (1R,3R)-chrysanthemoyl-CoA = cinerin I + CoA. It carries out the reaction (Z,S)-jasmololone + (1R,3R)-pyrethroyl-CoA = jasmolin II + CoA. It catalyses the reaction (Z,S)-cinerolone + (1R,3R)-pyrethroyl-CoA = cinerin II + CoA. It functions in the pathway isoprenoid biosynthesis. Component of the monoterpenoid pyrethrins biosynthesis; pyrethrins are widely used plant-derived pesticide. Acyltransferase that catalyzes the esterification of terpene acids and lipid alcohol substrates into pyrethrins; mediates the transfer of a chrysanthemoyl moiety from the coenzyme A (CoA) thio-ester chrysanthemoyl CoA to pyrethrolone, and, to a lower extent, to jasmololone and cinerolone thus producing pyrethrins (e.g. pyrethrin type I). Can also use pyrethroyl CoA as substrate. Also has esterase activity, being able to cleave the ester bond of pyrethrin I, p-nitrophenyl butanoate and p-nitrophenyl octanoate to produce pyrethrolone and p-nitrophenol, respectively. The sequence is that of GDSL lipase from Tanacetum cinerariifolium (Dalmatian daisy).